Reading from the N-terminus, the 137-residue chain is Nucleoside diphosphate kinase (137 aa).

Residues Lys9, Phe57, Arg85, Thr91, Arg102, and Asn112 each contribute to the ATP site. His115 functions as the Pros-phosphohistidine intermediate in the catalytic mechanism.

Belongs to the NDK family. As to quaternary structure, homotetramer. It depends on Mg(2+) as a cofactor.

It localises to the cytoplasm. It catalyses the reaction a 2'-deoxyribonucleoside 5'-diphosphate + ATP = a 2'-deoxyribonucleoside 5'-triphosphate + ADP. It carries out the reaction a ribonucleoside 5'-diphosphate + ATP = a ribonucleoside 5'-triphosphate + ADP. Major role in the synthesis of nucleoside triphosphates other than ATP. The ATP gamma phosphate is transferred to the NDP beta phosphate via a ping-pong mechanism, using a phosphorylated active-site intermediate. This chain is Nucleoside diphosphate kinase, found in Citrifermentans bemidjiense (strain ATCC BAA-1014 / DSM 16622 / JCM 12645 / Bem) (Geobacter bemidjiensis).